A 479-amino-acid polypeptide reads, in one-letter code: UDP-N-acetylmuramate--L-alanine ligase (479 aa).

G114–T120 lines the ATP pocket.

The protein belongs to the MurCDEF family.

It localises to the cytoplasm. The catalysed reaction is UDP-N-acetyl-alpha-D-muramate + L-alanine + ATP = UDP-N-acetyl-alpha-D-muramoyl-L-alanine + ADP + phosphate + H(+). It participates in cell wall biogenesis; peptidoglycan biosynthesis. Its function is as follows. Cell wall formation. The protein is UDP-N-acetylmuramate--L-alanine ligase of Pelodictyon phaeoclathratiforme (strain DSM 5477 / BU-1).